Here is a 196-residue protein sequence, read N- to C-terminus: Ribonuclease S-F11 (196 aa).

C16 and C21 are oxidised to a cystine. N28 carries an N-linked (GlcNAc...) asparagine glycan. Residue H32 is the Proton donor of the active site. RNA-binding positions include H32 and 69-70; that span reads QL. Disulfide bonds link C46-C94, C153-C186, and C169-C180. The active site involves Q87. Residue 90–91 coordinates RNA; that stretch reads KH. The Proton acceptor role is filled by H91.

It belongs to the RNase T2 family. Monomer.

The protein localises to the secreted. The protein resides in the extracellular space. It catalyses the reaction a ribonucleotidyl-ribonucleotide-RNA + H2O = a 3'-end 3'-phospho-ribonucleotide-RNA + a 5'-end dephospho-ribonucleoside-RNA + H(+). Functionally, self-incompatibility (SI) is the inherited ability of a flowering plant to prevent self-fertilization by discriminating between self and non-self pollen during pollination. In many species of the Solanaceae, self-incompatibility is controlled by the single, multiallelic locus S. This is Ribonuclease S-F11 from Nicotiana alata (Winged tobacco).